The following is a 264-amino-acid chain: Thiamine pyrophosphokinase 1 (264 aa).

Residues 1-12 show a composition bias toward polar residues; sequence MPLPTMTHSSSF. Positions 1–27 are disordered; the sequence is MPLPTMTHSSSFLRLPATSSPHPPPAD.

The protein belongs to the thiamine pyrophosphokinase family.

It is found in the cytoplasm. Its subcellular location is the cytosol. The catalysed reaction is thiamine + ATP = thiamine diphosphate + AMP + H(+). The protein operates within cofactor biosynthesis; thiamine diphosphate biosynthesis; thiamine diphosphate from thiamine: step 1/1. Its function is as follows. Catalyzes the phosphorylation of thiamine to thiamine pyrophosphate (TPP). TPP is an active cofactor for enzymes involved in glycolysis and energy production. Plant leaves require high levels of TPP for photosynthesis and carbohydrate metabolism. In Oryza sativa subsp. japonica (Rice), this protein is Thiamine pyrophosphokinase 1 (TPK1).